A 316-amino-acid chain; its full sequence is MTNTVKLTEFINDNSNLRVLQGQECVAGKEITVSDVYRPGLELSGYFDFYPADRVQLLGRTEISYAARLDHDLRRKVFEKICQKETPCLLVSRNLPVPVELKEAAEAAGTPILISNDATTYLMSMITQYLAVKLAERSSVHGVLVEVFGMGVLLTGESGVGKSETALALVQHGHRLIADDRVDVYQRDHETVVGEAPRILKHLMEIRGIGIIDVLKLFGIGAIKDETEISLVINLTNWDSKANYDRLGFQENTRIICGIAVTQVTIPVKVGRNMENIVEVAVMNFRAKAMGFDAAKTFDENLTSLIAENSEEEKRG.

Catalysis depends on residues His141 and Lys162. Residue 156–163 (GESGVGKS) participates in ATP binding. Residue Ser163 coordinates Mg(2+). Asp180 (proton acceptor; for phosphorylation activity. Proton donor; for dephosphorylation activity) is an active-site residue. Residues 204–213 (MEIRGIGIID) form an important for the catalytic mechanism of both phosphorylation and dephosphorylation region. Glu205 lines the Mg(2+) pocket. Arg246 is a catalytic residue. The important for the catalytic mechanism of dephosphorylation stretch occupies residues 267-272 (PVKVGR).

It belongs to the HPrK/P family. In terms of assembly, homohexamer. Requires Mg(2+) as cofactor.

It catalyses the reaction [HPr protein]-L-serine + ATP = [HPr protein]-O-phospho-L-serine + ADP + H(+). It carries out the reaction [HPr protein]-O-phospho-L-serine + phosphate + H(+) = [HPr protein]-L-serine + diphosphate. Its function is as follows. Catalyzes the ATP- as well as the pyrophosphate-dependent phosphorylation of a specific serine residue in HPr, a phosphocarrier protein of the phosphoenolpyruvate-dependent sugar phosphotransferase system (PTS). HprK/P also catalyzes the pyrophosphate-producing, inorganic phosphate-dependent dephosphorylation (phosphorolysis) of seryl-phosphorylated HPr (P-Ser-HPr). The two antagonistic activities of HprK/P are regulated by several intracellular metabolites, which change their concentration in response to the absence or presence of rapidly metabolisable carbon sources (glucose, fructose, etc.) in the growth medium. Therefore, by controlling the phosphorylation state of HPr, HPrK/P is a sensor enzyme that plays a major role in the regulation of carbon metabolism and sugar transport: it mediates carbon catabolite repression (CCR), and regulates PTS-catalyzed carbohydrate uptake and inducer exclusion. The chain is HPr kinase/phosphorylase from Lactobacillus delbrueckii subsp. bulgaricus (strain ATCC 11842 / DSM 20081 / BCRC 10696 / JCM 1002 / NBRC 13953 / NCIMB 11778 / NCTC 12712 / WDCM 00102 / Lb 14).